Consider the following 161-residue polypeptide: Large ribosomal subunit protein uL15 (161 aa).

Residues 1-43 are disordered; sequence MKLSEIADNVGSRKKRMRIGRGIGSGKGKTGGRGGKGQTARSG. Gly residues predominate over residues 21-37; it reads RGIGSGKGKTGGRGGKG.

In terms of assembly, part of the 50S ribosomal subunit.

Binds to the 23S rRNA. The sequence is that of Large ribosomal subunit protein uL15 from Rhodopseudomonas palustris (strain ATCC BAA-98 / CGA009).